The sequence spans 338 residues: tRNA N6-adenosine threonylcarbamoyltransferase (338 aa).

Fe cation is bound by residues histidine 111 and histidine 115. Substrate-binding positions include leucine 134–glycine 138, aspartate 167, glycine 180, and asparagine 272. Aspartate 300 lines the Fe cation pocket.

Belongs to the KAE1 / TsaD family. It depends on Fe(2+) as a cofactor.

It localises to the cytoplasm. It catalyses the reaction L-threonylcarbamoyladenylate + adenosine(37) in tRNA = N(6)-L-threonylcarbamoyladenosine(37) in tRNA + AMP + H(+). Required for the formation of a threonylcarbamoyl group on adenosine at position 37 (t(6)A37) in tRNAs that read codons beginning with adenine. Is involved in the transfer of the threonylcarbamoyl moiety of threonylcarbamoyl-AMP (TC-AMP) to the N6 group of A37, together with TsaE and TsaB. TsaD likely plays a direct catalytic role in this reaction. This Shewanella denitrificans (strain OS217 / ATCC BAA-1090 / DSM 15013) protein is tRNA N6-adenosine threonylcarbamoyltransferase.